Reading from the N-terminus, the 1527-residue chain is uncharacterized protein (1527 aa).

4 coiled-coil regions span residues 262–293 (NVEI…NINE), 699–751 (QQQQ…SEKL), 905–932 (NNLN…ENQI), and 1217–1255 (KIIS…QKSS). A disordered region spans residues 683–734 (TNQEQEQDQQDQPPPPQQQQEQQQEQQQQQEQQQQQDQQQQDQQQDQQEKQQ). Residues 700–728 (QQQEQQQEQQQQQEQQQQQDQQQQDQQQD) are compositionally biased toward low complexity.

This is an uncharacterized protein from Dictyostelium discoideum (Social amoeba).